Reading from the N-terminus, the 160-residue chain is Nucleotide-binding protein BP2916 (160 aa).

Belongs to the YajQ family.

In terms of biological role, nucleotide-binding protein. This Bordetella pertussis (strain Tohama I / ATCC BAA-589 / NCTC 13251) protein is Nucleotide-binding protein BP2916.